The sequence spans 444 residues: Tol-Pal system protein TolB (444 aa).

The signal sequence occupies residues 1–19; sequence MRNIIYFILSLLFSVTSYA.

The protein belongs to the TolB family. The Tol-Pal system is composed of five core proteins: the inner membrane proteins TolA, TolQ and TolR, the periplasmic protein TolB and the outer membrane protein Pal. They form a network linking the inner and outer membranes and the peptidoglycan layer.

The protein resides in the periplasm. Part of the Tol-Pal system, which plays a role in outer membrane invagination during cell division and is important for maintaining outer membrane integrity. This Rickettsia africae (strain ESF-5) protein is Tol-Pal system protein TolB.